The following is a 300-amino-acid chain: Meiotically up-regulated gene 165 protein (300 aa).

2 disordered regions span residues 1–38 (MLEKGEHIEYPNTPPLHSPPESHTFSSQTDDSYFHKPS) and 50–109 (TNSS…STLE). Polar residues predominate over residues 21–38 (ESHTFSSQTDDSYFHKPS). The segment covering 52–69 (SSVPSASRSPESIASSQS) has biased composition (low complexity). Over residues 94–103 (TLRKRGRKPK) the composition is skewed to basic residues.

The protein resides in the nucleus. Its function is as follows. Has a role in meiosis. The protein is Meiotically up-regulated gene 165 protein (mug165) of Schizosaccharomyces pombe (strain 972 / ATCC 24843) (Fission yeast).